Here is a 90-residue protein sequence, read N- to C-terminus: Protein RALF-like 29 (90 aa).

The N-terminal stretch at 1 to 25 (MIKTKEVTFVTILIVLCVFISTIHA) is a signal peptide. 2 disulfides stabilise this stretch: Cys41–Cys50 and Cys63–Cys69.

It belongs to the plant rapid alkalinization factor (RALF) family.

It localises to the secreted. Cell signaling peptide that may regulate plant stress, growth, and development. Mediates a rapid alkalinization of extracellular space by mediating a transient increase in the cytoplasmic Ca(2+) concentration leading to a calcium-dependent signaling events through a cell surface receptor and a concomitant activation of some intracellular mitogen-activated protein kinases. The sequence is that of Protein RALF-like 29 (RALFL29) from Arabidopsis thaliana (Mouse-ear cress).